The primary structure comprises 490 residues: Betaine aldehyde dehydrogenase (490 aa).

Residues T26, I27, and D93 each contribute to the K(+) site. 150–152 (GAW) provides a ligand contact to NAD(+). Catalysis depends on K162, which acts as the Charge relay system. 176-179 (KPSE) contacts NAD(+). V180 lines the K(+) pocket. 230–233 (GTST) lines the NAD(+) pocket. Residue L246 coordinates K(+). E252 acts as the Proton acceptor in catalysis. 3 residues coordinate NAD(+): G254, C286, and E387. C286 acts as the Nucleophile in catalysis. A Cysteine sulfenic acid (-SOH) modification is found at C286. Positions 457 and 460 each coordinate K(+). E464 (charge relay system) is an active-site residue.

The protein belongs to the aldehyde dehydrogenase family. In terms of assembly, dimer of dimers. The cofactor is K(+).

It catalyses the reaction betaine aldehyde + NAD(+) + H2O = glycine betaine + NADH + 2 H(+). It functions in the pathway amine and polyamine biosynthesis; betaine biosynthesis via choline pathway; betaine from betaine aldehyde: step 1/1. Involved in the biosynthesis of the osmoprotectant glycine betaine. Catalyzes the irreversible oxidation of betaine aldehyde to the corresponding acid. This chain is Betaine aldehyde dehydrogenase, found in Pseudomonas paraeruginosa (strain DSM 24068 / PA7) (Pseudomonas aeruginosa (strain PA7)).